The following is an 878-amino-acid chain: Phosphoenolpyruvate carboxylase (878 aa).

Active-site residues include His138 and Lys544.

This sequence belongs to the PEPCase type 1 family. The cofactor is Mg(2+).

It carries out the reaction oxaloacetate + phosphate = phosphoenolpyruvate + hydrogencarbonate. In terms of biological role, forms oxaloacetate, a four-carbon dicarboxylic acid source for the tricarboxylic acid cycle. The protein is Phosphoenolpyruvate carboxylase of Psychromonas ingrahamii (strain DSM 17664 / CCUG 51855 / 37).